The following is a 103-amino-acid chain: Integration host factor subunit alpha (103 aa).

The protein belongs to the bacterial histone-like protein family. Heterodimer of an alpha and a beta chain.

Its function is as follows. This protein is one of the two subunits of integration host factor, a specific DNA-binding protein that functions in genetic recombination as well as in transcriptional and translational control. This Aromatoleum aromaticum (strain DSM 19018 / LMG 30748 / EbN1) (Azoarcus sp. (strain EbN1)) protein is Integration host factor subunit alpha.